The following is a 56-amino-acid chain: uncharacterized protein (56 aa).

This is an uncharacterized protein from Lepidoptera (butterflies and moths).